The following is a 193-amino-acid chain: Probable gluconokinase (193 aa).

21–28 (GPAGSGKT) provides a ligand contact to ATP.

This sequence belongs to the gluconokinase GntK/GntV family.

The catalysed reaction is D-gluconate + ATP = 6-phospho-D-gluconate + ADP + H(+). It functions in the pathway carbohydrate acid metabolism; D-gluconate degradation. This chain is Probable gluconokinase, found in Schizosaccharomyces pombe (strain 972 / ATCC 24843) (Fission yeast).